We begin with the raw amino-acid sequence, 471 residues long: 5-hydroxytryptamine receptor 2B (471 aa).

Residues 1–26 (MFQAAVGPLQTNISLPEETPGLELNW) lie on the Extracellular side of the membrane. N-linked (GlcNAc...) asparagine glycosylation occurs at asparagine 12. The helical transmembrane segment at 27–49 (AALLIVMVIIPTIGGNILVILAV) threads the bilayer. Residues 50–60 (WLEKKLQNATN) lie on the Cytoplasmic side of the membrane. The helical transmembrane segment at 61–83 (FFLMSLAVADLLVGLLVMPIALI) threads the bilayer. Over 84–99 (TILYDSDWPLPEPLCP) the chain is Extracellular. Cysteines 98 and 182 form a disulfide. Residues 100–121 (IWLFLDVLFSTASIMHLCAISL) traverse the membrane as a helical segment. Positions 105 and 110 each coordinate ergotamine. The short motif at 122–124 (DRY) is the DRY motif; important for ligand-induced conformation changes element. The Cytoplasmic segment spans residues 122-141 (DRYIAIKKPIQHSQYKSRAK). The chain crosses the membrane as a helical span at residues 142–162 (VMLKIALVWLISICIAIPIPI). Topologically, residues 163-191 (KGLRNYPHPNNITFTSNHTCVLKTDTFQE) are extracellular. N-linked (GlcNAc...) asparagine glycans are attached at residues asparagine 173 and asparagine 179. Leucine 184 contacts ergotamine. The short motif at 187–190 (DTFQ) is the [DE]RFG motif; may stabilize a conformation that preferentially activates signaling via beta-arrestin family members element. The chain crosses the membrane as a helical span at residues 192-214 (FIIFGSLVAFFIPLTIMMIIYFL). Residues 215–308 (TVRVLRKKVY…TLTNEQRASK (94 aa)) are Cytoplasmic-facing. Residues 309–329 (VLGIVFLLFVVMWCPFFITNI) form a helical membrane-spanning segment. The Extracellular segment spans residues 330 to 344 (TSALCGPCDANIIGR). Cysteine 334 and cysteine 337 form a disulfide bridge. A helical transmembrane segment spans residues 345 to 366 (LMEIFSWVGYVSSGINPLVYTL). The short motif at 360–364 (NPLVY) is the NPxxY motif; important for ligand-induced conformation changes and signaling element. At 367-471 (FNKTFRQAFT…CKQEERVSCV (105 aa)) the chain is on the cytoplasmic side. A lipid anchor (S-palmitoyl cysteine) is attached at cysteine 381. Residues 469 to 471 (SCV) carry the PDZ-binding motif.

It belongs to the G-protein coupled receptor 1 family. Detected in brain, heart and gut.

The protein resides in the cell membrane. The protein localises to the synapse. It localises to the synaptosome. Its function is as follows. G-protein coupled receptor for 5-hydroxytryptamine (serotonin). Also functions as a receptor for various ergot alkaloid derivatives and psychoactive substances. Ligand binding causes a conformation change that triggers signaling via guanine nucleotide-binding proteins (G proteins) and modulates the activity of downstream effectors. HTR2B is coupled to G(q)/G(11) G alpha proteins and activates phospholipase C-beta, releasing diacylglycerol (DAG) and inositol 1,4,5-trisphosphate (IP3) second messengers that modulate the activity of phosphatidylinositol 3-kinase and promote the release of Ca(2+) ions from intracellular stores, respectively. Beta-arrestin family members inhibit signaling via G proteins and mediate activation of alternative signaling pathways. Plays a role in the regulation of dopamine and 5-hydroxytryptamine release, 5-hydroxytryptamine uptake and in the regulation of extracellular dopamine and 5-hydroxytryptamine levels, and thereby affects neural activity. In Dichotomyctere fluviatilis (Green pufferfish), this protein is 5-hydroxytryptamine receptor 2B (htr2b).